We begin with the raw amino-acid sequence, 704 residues long: Elongation factor G (704 aa).

Positions 8 to 290 (ARYRNIGISA…AVIDYLPSPV (283 aa)) constitute a tr-type G domain. GTP contacts are provided by residues 17–24 (AHIDAGKT), 88–92 (DTPGH), and 142–145 (NKMD).

The protein belongs to the TRAFAC class translation factor GTPase superfamily. Classic translation factor GTPase family. EF-G/EF-2 subfamily.

The protein localises to the cytoplasm. Catalyzes the GTP-dependent ribosomal translocation step during translation elongation. During this step, the ribosome changes from the pre-translocational (PRE) to the post-translocational (POST) state as the newly formed A-site-bound peptidyl-tRNA and P-site-bound deacylated tRNA move to the P and E sites, respectively. Catalyzes the coordinated movement of the two tRNA molecules, the mRNA and conformational changes in the ribosome. This chain is Elongation factor G, found in Salmonella arizonae (strain ATCC BAA-731 / CDC346-86 / RSK2980).